A 543-amino-acid polypeptide reads, in one-letter code: Myotubularin-related protein 9-like (543 aa).

Residues 124 to 502 (AWHFHPPECY…QSLRLWQGLF (379 aa)) enclose the Myotubularin phosphatase domain.

Belongs to the protein-tyrosine phosphatase family. Non-receptor class myotubularin subfamily.

Probable pseudophosphatase. The polypeptide is Myotubularin-related protein 9-like (Bos taurus (Bovine)).